The sequence spans 555 residues: Dihydroxy-acid dehydratase (555 aa).

Position 46 (Cys46) interacts with [2Fe-2S] cluster. Asp78 is a binding site for Mg(2+). Cys119 contacts [2Fe-2S] cluster. 2 residues coordinate Mg(2+): Asp120 and Lys121. Lys121 bears the N6-carboxylysine mark. [2Fe-2S] cluster is bound at residue Cys191. Glu442 is a Mg(2+) binding site. Ser468 serves as the catalytic Proton acceptor.

This sequence belongs to the IlvD/Edd family. As to quaternary structure, homodimer. The cofactor is [2Fe-2S] cluster. Mg(2+) is required as a cofactor.

The catalysed reaction is (2R)-2,3-dihydroxy-3-methylbutanoate = 3-methyl-2-oxobutanoate + H2O. It carries out the reaction (2R,3R)-2,3-dihydroxy-3-methylpentanoate = (S)-3-methyl-2-oxopentanoate + H2O. It functions in the pathway amino-acid biosynthesis; L-isoleucine biosynthesis; L-isoleucine from 2-oxobutanoate: step 3/4. It participates in amino-acid biosynthesis; L-valine biosynthesis; L-valine from pyruvate: step 3/4. Its function is as follows. Functions in the biosynthesis of branched-chain amino acids. Catalyzes the dehydration of (2R,3R)-2,3-dihydroxy-3-methylpentanoate (2,3-dihydroxy-3-methylvalerate) into 2-oxo-3-methylpentanoate (2-oxo-3-methylvalerate) and of (2R)-2,3-dihydroxy-3-methylbutanoate (2,3-dihydroxyisovalerate) into 2-oxo-3-methylbutanoate (2-oxoisovalerate), the penultimate precursor to L-isoleucine and L-valine, respectively. This chain is Dihydroxy-acid dehydratase, found in Thermus thermophilus (strain ATCC 27634 / DSM 579 / HB8).